The following is a 328-amino-acid chain: Hairy/enhancer-of-split related with YRPW motif-like protein (328 aa).

Residues 1–54 (MKRPREPSGSDSESDGPIDVGREGELSQMARPLSTPSPSQMQARKKRRGIIEKR) are disordered. The tract at residues 42–111 (QARKKRRGII…GGTGFFDARA (70 aa)) is transcriptional repression and interaction with NCOR1 and SIN3A. In terms of domain architecture, bHLH spans 43-98 (ARKKRRGIIEKRRRDRINSSLSELRRLVPTAFEKQGSSKLEKAEVLQMTVDHLKML). Residues 116-153 (FRSIGFRECLTEVIRYLGVLEGPSSRADPVRIRLLSHL) enclose the Orange domain. The disordered stretch occupies residues 236-272 (LLPSRGASSTRRARPLERPAAPLPAAPSGRATRGSHM).

Belongs to the HEY family. In terms of assembly, self-associates. Interacts with GATA4, GATA6, HES1, HEY1 and HEY2. Interacts with HDAC1, NCOR1 and SIN3A.

The protein localises to the nucleus. Its function is as follows. Downstream effector of Notch signaling which may be required for cardiovascular development. Transcriptional repressor which binds preferentially to the canonical E box sequence 5'-CACGTG-3'. Represses transcription by the cardiac transcriptional activators GATA4 and GATA6. The polypeptide is Hairy/enhancer-of-split related with YRPW motif-like protein (HEYL) (Bos taurus (Bovine)).